The chain runs to 188 residues: MISPIKNIKNVFPINTANTEYIVRNIYPRVEHGYFNESPNIYDKKYISGITRSMAQLKIEEFINEKSRRLNYMKTMYSPCPEDFQPISRAEASTPEGSWLTVISGKRPMGQFSVDSLYHPDLHALCELPEISCKIFSKENSDFLYIIVVFRNDSPQGELRANRFIELYDIKREIMQVLRDESPEIKVY.

It belongs to the NleE/OspZ family.

The protein localises to the secreted. It localises to the host cytoplasm. Its subcellular location is the host nucleus. Inactive effector protein: in contrast to other members of the family, does not have the ability to inhibit host cell NF-kappa-B activation. Probably lacks cysteine S-methyltransferase activity due to its inability to bind S-adenosyl-L-methionine at the C-terminus. The chain is Inactive cysteine S-methyltransferase OspZ from Shigella flexneri.